The primary structure comprises 1365 residues: Histone-lysine N-methyltransferase NSD2 (1365 aa).

Phosphothreonine occurs at positions 110 and 114. Serine 121 carries the post-translational modification Phosphoserine. The segment at 149 to 170 (ADVSQSEENGQKPENKARRNRK) is disordered. Serine 172 carries the post-translational modification Phosphoserine. Residues 222–286 (VGDLVWSKVS…FEKSLVAFEG (65 aa)) enclose the PWWP 1 domain. At serine 376 the chain carries Phosphoserine. 2 disordered regions span residues 376–455 (SSGV…RKGD) and 516–658 (EDSG…SKKS). The residue at position 422 (threonine 422) is a Phosphothreonine. The segment at residues 453–521 (KGDAASQFLV…VQAEEDSGNV (69 aa)) is a DNA-binding region (HMG box). Position 544 is a phosphothreonine (threonine 544). Over residues 552–567 (DKHSLRKRDTITDKTA) the composition is skewed to basic and acidic residues. Over residues 580 to 590 (SLKSQAATKNL) the composition is skewed to polar residues. The segment covering 606 to 622 (AASSALGFSKSSSPSAS) has biased composition (low complexity). Serine 614 bears the Phosphoserine mark. Acidic residues predominate over residues 632–648 (PGDEPSESPYESADETQ). PHD-type zinc fingers lie at residues 667–713 (EYVC…CASG), 714–770 (IHSC…CHAS), and 831–875 (VSWC…CRAG). The PWWP 2 domain occupies 880-942 (FQDIIWVKLG…QARVFPYMEG (63 aa)). Residues 1011 to 1061 (SEIPKCNCKPTDENPCGFDSECLNRMLMFECHPQVCPAGEFCQNQCFTKRQ) form the AWS domain. Positions 1016, 1018, 1026, 1032, 1041, 1046, and 1052 each coordinate Zn(2+). The 118-residue stretch at 1063 to 1180 (PETKIIKTDG…AGTELTFNYN (118 aa)) folds into the SET domain. Residues tryptophan 1075, 1115-1118 (THFY), and 1141-1142 (NH) contribute to the S-adenosyl-L-methionine site. Cysteine 1144 is a Zn(2+) binding site. Asparagine 1186 is a binding site for S-adenosyl-L-methionine. The region spanning 1187–1203 (EKTVCRCGASNCSGFLG) is the Post-SET domain. Residue cysteine 1191 participates in Zn(2+) binding. Arginine 1192 is an S-adenosyl-L-methionine binding site. The Zn(2+) site is built by cysteine 1193 and cysteine 1198. Positions 1207-1232 (KTSTTLSSEEKGKKTKKKTRRRRAKG) are disordered. Positions 1219–1230 (KKTKKKTRRRRA) are enriched in basic residues. Residues 1239–1286 (EDECFRCGDGGQLVLCDRKFCTKAYHLSCLGLGKRPFGKWECPWHHCD) form a PHD-type 4; atypical zinc finger. Residues 1333–1365 (VRSTKTEKPPPEPGKPKGKRRRRRGWRRVTEGK) are disordered. Residues 1348–1359 (PKGKRRRRRGWR) are compositionally biased toward basic residues.

Belongs to the class V-like SAM-binding methyltransferase superfamily. Histone-lysine methyltransferase family. SET2 subfamily. As to quaternary structure, interacts with HDAC1. Interacts (via PHD-type zinc fingers 1, 2 and 3) with SALL1. Interacts (via PHD-type 1, 2 and 3) with SALL4. Interacts with NANOG. Interacts with OGT. Interacts (via HMG box) with NKX2-5. As to expression, widely expressed. Predominantly expressed in thymus and testis.

Its subcellular location is the nucleus. It localises to the chromosome. It is found in the cytoplasm. The protein localises to the nucleolus. It catalyses the reaction L-lysyl(36)-[histone H3] + S-adenosyl-L-methionine = N(6)-methyl-L-lysyl(36)-[histone H3] + S-adenosyl-L-homocysteine + H(+). The enzyme catalyses L-lysyl(36)-[histone H3] + 2 S-adenosyl-L-methionine = N(6),N(6)-dimethyl-L-lysyl(36)-[histone H3] + 2 S-adenosyl-L-homocysteine + 2 H(+). Histone methyltransferase which specifically dimethylates nucleosomal histone H3 at 'Lys-36' (H3K36me2). Also monomethylates nucleosomal histone H3 at 'Lys-36' (H3K36me) in vitro. Does not trimethylate nucleosomal histone H3 at 'Lys-36' (H3K36me3). However, specifically trimethylates histone H3 at 'Lys-36' (H3K36me3) at euchromatic regions in embryonic stem (ES) cells. By methylating histone H3 at 'Lys-36', involved in the regulation of gene transcription during various biological processes. In ES cells, associates with developmental transcription factors such as SALL1 and represses inappropriate gene transcription mediated by histone deacetylation. During heart development, associates with transcription factor NKX2-5 to repress transcription of NKX2-5 target genes. Plays an essential role in adipogenesis, by regulating expression of genes involved in pre-adipocyte differentiation. During T-cell receptor (TCR) and CD28-mediated T-cell activation, promotes the transcription of transcription factor BCL6 which is required for follicular helper T (Tfh) cell differentiation. During B-cell development, required for the generation of the B1 lineage. During B2 cell activation, may contribute to the control of isotype class switch recombination (CRS), splenic germinal center formation, and the humoral immune response. Plays a role in class switch recombination of the immunoglobulin heavy chain (IgH) locus during B-cell activation. By regulating the methylation of histone H3 at 'Lys-36' and histone H4 at 'Lys-20' at the IgH locus, involved in TP53BP1 recruitment to the IgH switch region and promotes the transcription of IgA. Its function is as follows. Histone methyltransferase which specifically dimethylates nucleosomal histone H3 at 'Lys-36' (H3K36me2). In terms of biological role, histone methyltransferase which specifically dimethylates nucleosomal histone H3 at 'Lys-36' (H3K36me2). Methylation of histone H3 at 'Lys-27' is controversial. Mono-, di- or tri-methylates histone H3 at 'Lys-27' (H3K27me, H3K27me2 and H3K27me3). Does not methylate histone H3 at 'Lys-27'. May act as a transcription regulator that binds DNA and suppresses IL5 transcription through HDAC recruitment. In Homo sapiens (Human), this protein is Histone-lysine N-methyltransferase NSD2.